A 252-amino-acid polypeptide reads, in one-letter code: 3-dehydroquinate dehydratase (252 aa).

Residues 46 to 48 (EWR) and arginine 82 each bind 3-dehydroquinate. Histidine 143 functions as the Proton donor/acceptor in the catalytic mechanism. The active-site Schiff-base intermediate with substrate is the lysine 170. Residues arginine 212, serine 231, and glutamine 235 each contribute to the 3-dehydroquinate site.

Belongs to the type-I 3-dehydroquinase family. As to quaternary structure, homodimer.

It catalyses the reaction 3-dehydroquinate = 3-dehydroshikimate + H2O. Its pathway is metabolic intermediate biosynthesis; chorismate biosynthesis; chorismate from D-erythrose 4-phosphate and phosphoenolpyruvate: step 3/7. Involved in the third step of the chorismate pathway, which leads to the biosynthesis of aromatic amino acids. Catalyzes the cis-dehydration of 3-dehydroquinate (DHQ) and introduces the first double bond of the aromatic ring to yield 3-dehydroshikimate. The chain is 3-dehydroquinate dehydratase from Listeria monocytogenes serotype 4a (strain HCC23).